The following is a 464-amino-acid chain: tRNA-2-methylthio-N(6)-dimethylallyladenosine synthase (464 aa).

Positions 19 to 135 constitute an MTTase N-terminal domain; that stretch reads GSYWITTFGC…LENLLERVDL (117 aa). Residues Cys28, Cys64, Cys98, Cys170, Cys174, and Cys177 each contribute to the [4Fe-4S] cluster site. The Radical SAM core domain occupies 156–393; it reads RDSSICGWVN…NELVETTSRK (238 aa). The TRAM domain occupies 396 to 464; sequence QRYLNNIESV…SFSLSGQIYK (69 aa).

It belongs to the methylthiotransferase family. MiaB subfamily. As to quaternary structure, monomer. Requires [4Fe-4S] cluster as cofactor.

It localises to the cytoplasm. The catalysed reaction is N(6)-dimethylallyladenosine(37) in tRNA + (sulfur carrier)-SH + AH2 + 2 S-adenosyl-L-methionine = 2-methylsulfanyl-N(6)-dimethylallyladenosine(37) in tRNA + (sulfur carrier)-H + 5'-deoxyadenosine + L-methionine + A + S-adenosyl-L-homocysteine + 2 H(+). Its function is as follows. Catalyzes the methylthiolation of N6-(dimethylallyl)adenosine (i(6)A), leading to the formation of 2-methylthio-N6-(dimethylallyl)adenosine (ms(2)i(6)A) at position 37 in tRNAs that read codons beginning with uridine. The polypeptide is tRNA-2-methylthio-N(6)-dimethylallyladenosine synthase (Prochlorococcus marinus subsp. pastoris (strain CCMP1986 / NIES-2087 / MED4)).